Here is a 204-residue protein sequence, read N- to C-terminus: Ras-related protein R-Ras2 (204 aa).

A2 is modified (N-acetylalanine). Residue 21–29 (GGGGVGKSA) coordinates GTP. Residues 43-51 (YDPTIEDSY) carry the Effector region motif. GTP-binding positions include 68–72 (DTAGQ), 127–130 (NKAD), and 157–159 (SAK). Position 186 is a phosphoserine (S186). N6-palmitoyl lysine attachment occurs at residues K192, K194, K196, and K197. Residue C199 is the site of S-palmitoyl cysteine attachment. Residue C201 is modified to Cysteine methyl ester. The S-farnesyl cysteine moiety is linked to residue C201. Positions 202–204 (VIF) are cleaved as a propeptide — removed in mature form.

It belongs to the small GTPase superfamily. Ras family. Interacts with RASSF5. In terms of processing, may be post-translationally modified by both palmitoylation and polyisoprenylation. Post-translationally, fatty-acylation at Lys-192, Lys-194; lys-196 and Lys-197 is required for localization to the plasma membrane and activity. Defatty-acylated by SIRT6, affecting its localization to the plasma membrane. Ubiquitously present in all tissues examined, with the highest levels in heart, placenta, and skeletal muscle. Moderate levels in lung and liver; low levels in brain, kidney, and pancreas.

The protein resides in the cell membrane. Its subcellular location is the golgi apparatus membrane. The enzyme catalyses GTP + H2O = GDP + phosphate + H(+). In terms of biological role, GTP-binding protein with GTPase activity, involved in the regulation of MAPK signaling pathway and thereby controlling multiple cellular processes. Regulates craniofacial development. This chain is Ras-related protein R-Ras2, found in Homo sapiens (Human).